The chain runs to 403 residues: Mitochondrial intermembrane space import and assembly protein 40 (403 aa).

A mitochondrion-targeting transit peptide spans 1-31; the sequence is MLRNLVVRNACRNRPSIQVARGLCRHQTRRL. Residues 33–46 lie on the Mitochondrial matrix side of the membrane; the sequence is ASSPQFGRNSNQEK. The helical; Signal-anchor for type II membrane protein transmembrane segment at 47–66 threads the bilayer; the sequence is TAGFIMGILSMAGALYFIAP. Topologically, residues 67 to 403 are mitochondrial intermembrane; it reads NRKPLFASRK…KEPLNEESKP (337 aa). 5 stretches are compositionally biased toward basic and acidic residues: residues 75 to 84, 101 to 118, 147 to 168, 206 to 230, and 262 to 271; these read RKVESDKTAE, NNSK…KNDE, EDNK…KDDE, SEKK…KTTT, and EELRKQEEKQ. The segment at 75-292 is disordered; that stretch reads RKVESDKTAE…GAYNPDTGEI (218 aa). Intrachain disulfides connect Cys296–Cys298, Cys307–Cys340, and Cys317–Cys330. Residues 304–348 form the CHCH domain; that stretch reads HGPCGEEFKSAFSCFVYSEAEPKGIDCVEKFQHMQDCFRKYPEHY. 2 consecutive short sequence motifs (cx9C motif) follow at residues 307–317 and 330–340; these read CGEEFKSAFSC and CVEKFQHMQDC. The disordered stretch occupies residues 351-403; it reads QLKETSDDEEPQDKVKVNTIESAPNVSSAKENAAKKAEQSDVKKEPLNEESKP. Residues 369–378 are compositionally biased toward polar residues; sequence TIESAPNVSS. The span at 382–403 shows a compositional bias: basic and acidic residues; that stretch reads NAAKKAEQSDVKKEPLNEESKP.

Monomer. Interacts with the FAD-linked sulfhydryl oxidase ERV1 and with the substrate proteins COX17, TIM9, and TIM13, forming transient intermolecular disulfide bridges. Interacts with FCJ1. Cu(2+) serves as cofactor. It depends on Zn(2+) as a cofactor.

It localises to the mitochondrion inner membrane. Its function is as follows. Required for the import and folding of small cysteine-containing proteins (small Tim) in the mitochondrial intermembrane space (IMS). Forms a redox cycle with ERV1 that involves a disulfide relay system. Precursor proteins to be imported into the IMS are translocated in their reduced form into the mitochondria. The oxidized form of MIA40 forms a transient intermolecular disulfide bridge with the reduced precursor protein, resulting in oxidation of the precursor protein that now contains an intramolecular disulfide bond and is able to undergo folding in the IMS. Reduced MIA40 is reoxidized by FAD-linked sulfhydryl oxidase ERV1. The protein is Mitochondrial intermembrane space import and assembly protein 40 (MIA40) of Saccharomyces cerevisiae (strain ATCC 204508 / S288c) (Baker's yeast).